Consider the following 357-residue polypeptide: MEWLDILESHGQALLGPTAWLVLWTIVKIVVIAVPIILCVAYLTYWERKMIGWMHVRLGPTRVGFRGLLQPFADVFKLLTKEVVVPTQANKILFVVAPVVTLMPALAAWAVVPFGPEVVLANVNAGLLYVMAITSIGVYGVIVAGWASNSKYAFLGALRASAQMVSYELAIGFVLVTVLLVSGSLNMSEIVLGQTRGWFAEHGLTFLSWNWLPLLPLFVIYVISAVAETNRHPFDVVEGESEIVAGHMVEYSGMAFALFFLGEYANMILLSCMASIMFLGGWTSPIDIAPLTWIPGWIWLGIKTFCVVSLFVWFRASFPRYRYDQIMRLGWKIFIPLTGVWLVVVAIWMQTPWNIWR.

A run of 8 helical transmembrane segments spans residues Trp-20–Val-40, Ile-92–Val-112, Leu-127–Ala-147, Val-165–Leu-185, Phe-206–Val-226, Met-254–Ala-274, Ile-294–Phe-314, and Leu-329–Met-349.

Belongs to the complex I subunit 1 family. As to quaternary structure, NDH-1 is composed of 14 different subunits. Subunits NuoA, H, J, K, L, M, N constitute the membrane sector of the complex.

Its subcellular location is the cell inner membrane. It carries out the reaction a quinone + NADH + 5 H(+)(in) = a quinol + NAD(+) + 4 H(+)(out). Its function is as follows. NDH-1 shuttles electrons from NADH, via FMN and iron-sulfur (Fe-S) centers, to quinones in the respiratory chain. The immediate electron acceptor for the enzyme in this species is believed to be ubiquinone. Couples the redox reaction to proton translocation (for every two electrons transferred, four hydrogen ions are translocated across the cytoplasmic membrane), and thus conserves the redox energy in a proton gradient. This subunit may bind ubiquinone. The protein is NADH-quinone oxidoreductase subunit H of Bordetella petrii (strain ATCC BAA-461 / DSM 12804 / CCUG 43448).